Here is a 113-residue protein sequence, read N- to C-terminus: MNTVRVTFLLVFVLAVSLGQADKDENRMEMQEKTEQGKSYLDFAENLLLQKLEELEAKLLEEDSEESRNSRQKRCIGEGVPCDENDPRCCSGLVCLKPTLHGIWYKSYYCHKK.

An N-terminal signal peptide occupies residues 1 to 21; sequence MNTVRVTFLLVFVLAVSLGQA. Residues 22–74 constitute a propeptide that is removed on maturation; sequence DKDENRMEMQEKTEQGKSYLDFAENLLLQKLEELEAKLLEEDSEESRNSRQKR. Residues 61–83 are disordered; that stretch reads EEDSEESRNSRQKRCIGEGVPCD. 3 cysteine pairs are disulfide-bonded: C75–C90, C82–C95, and C89–C110.

The protein belongs to the neurotoxin 14 (magi-1) family. 01 (HNTX-16) subfamily. In terms of tissue distribution, expressed by the venom gland.

Its subcellular location is the secreted. Probable ion channel inhibitor. The chain is U11-theraphotoxin-Hhn1r from Cyriopagopus hainanus (Chinese bird spider).